A 347-amino-acid chain; its full sequence is Geranylgeranyl pyrophosphate synthase 7, chloroplastic (347 aa).

The N-terminal 39 residues, 1–39 (MTTLNLSIFPSVKISSSASIPGFIKIQPFLLRRKLSTVL), are a transit peptide targeting the chloroplast. Lys95, Arg98, and His127 together coordinate isopentenyl diphosphate. Mg(2+)-binding residues include Asp134 and Asp140. Arg145 contributes to the dimethylallyl diphosphate binding site. Arg146 contacts isopentenyl diphosphate. Residues Lys232, Thr233, Gln270, Lys287, and Lys297 each coordinate dimethylallyl diphosphate.

This sequence belongs to the FPP/GGPP synthase family. Monomer. The cofactor is Mg(2+).

Its subcellular location is the plastid. It localises to the chloroplast. It catalyses the reaction isopentenyl diphosphate + dimethylallyl diphosphate = (2E)-geranyl diphosphate + diphosphate. The catalysed reaction is isopentenyl diphosphate + (2E)-geranyl diphosphate = (2E,6E)-farnesyl diphosphate + diphosphate. It carries out the reaction isopentenyl diphosphate + (2E,6E)-farnesyl diphosphate = (2E,6E,10E)-geranylgeranyl diphosphate + diphosphate. Its pathway is isoprenoid biosynthesis; farnesyl diphosphate biosynthesis; farnesyl diphosphate from geranyl diphosphate and isopentenyl diphosphate: step 1/1. It participates in isoprenoid biosynthesis; geranyl diphosphate biosynthesis; geranyl diphosphate from dimethylallyl diphosphate and isopentenyl diphosphate: step 1/1. It functions in the pathway isoprenoid biosynthesis; geranylgeranyl diphosphate biosynthesis; geranylgeranyl diphosphate from farnesyl diphosphate and isopentenyl diphosphate: step 1/1. Functionally, catalyzes the trans-addition of the three molecules of IPP onto DMAPP to form geranylgeranyl pyrophosphate. In Arabidopsis thaliana (Mouse-ear cress), this protein is Geranylgeranyl pyrophosphate synthase 7, chloroplastic.